Here is a 252-residue protein sequence, read N- to C-terminus: MQRDEKLFELTLDTVLQRLNDLKLAVLSMIQKLELEYETINWPTFLDNFAIISSHLTGLTKILAKEQCPPLRNRTVLPLLVSMDRDDTLINITEGRVPVFSHDIVPDYLRTRPDPITEQKMLQNEQKAANLTNDAAMKQVTQYNKVVSHVLDMVSKAREEWEIESSSRTGIQQTSSMADTQLLVAAVGMGKGLKLTNYGPGPGMMVPPSIRAPSPMGGPAMSPGNVQQQLGKAPSAVKTNIKSANQVHPFSR.

The stretch at T117–Q142 forms a coiled coil. Positions P215 to G224 are enriched in low complexity. The segment at P215 to R252 is disordered. The span at V237–R252 shows a compositional bias: polar residues.

It belongs to the Mediator complex subunit 8 family. Component of the Mediator complex.

It is found in the nucleus. Component of the Mediator complex, a coactivator involved in the regulated transcription of nearly all RNA polymerase II-dependent genes. Mediator functions as a bridge to convey information from gene-specific regulatory proteins to the basal RNA polymerase II transcription machinery. Mediator is recruited to promoters by direct interactions with regulatory proteins and serves as a scaffold for the assembly of a functional preinitiation complex with RNA polymerase II and the general transcription factors. Required for activated transcription of the MtnA and MtnB genes. In Drosophila melanogaster (Fruit fly), this protein is Mediator of RNA polymerase II transcription subunit 8 (MED8).